The following is a 634-amino-acid chain: Probable threonine--tRNA ligase, cytoplasmic (634 aa).

The 61-residue stretch at 1–61 (MSIYVTFKGQ…NENQKIELYD (61 aa)) folds into the TGS domain.

This sequence belongs to the class-II aminoacyl-tRNA synthetase family.

It is found in the cytoplasm. The enzyme catalyses tRNA(Thr) + L-threonine + ATP = L-threonyl-tRNA(Thr) + AMP + diphosphate + H(+). The sequence is that of Probable threonine--tRNA ligase, cytoplasmic from Enterocytozoon bieneusi (strain H348) (Microsporidian parasite).